A 449-amino-acid chain; its full sequence is UDP-N-acetylmuramoylalanine--D-glutamate ligase (449 aa).

ATP is bound at residue 118 to 124; sequence GSNGKTT.

This sequence belongs to the MurCDEF family.

It is found in the cytoplasm. It carries out the reaction UDP-N-acetyl-alpha-D-muramoyl-L-alanine + D-glutamate + ATP = UDP-N-acetyl-alpha-D-muramoyl-L-alanyl-D-glutamate + ADP + phosphate + H(+). The protein operates within cell wall biogenesis; peptidoglycan biosynthesis. Functionally, cell wall formation. Catalyzes the addition of glutamate to the nucleotide precursor UDP-N-acetylmuramoyl-L-alanine (UMA). The polypeptide is UDP-N-acetylmuramoylalanine--D-glutamate ligase (Leuconostoc citreum (strain KM20)).